Consider the following 274-residue polypeptide: 3-methyl-2-oxobutanoate hydroxymethyltransferase (274 aa).

Residues aspartate 50 and aspartate 89 each contribute to the Mg(2+) site. 3-methyl-2-oxobutanoate-binding positions include 50-51 (DS), aspartate 89, and lysine 119. Residue glutamate 121 participates in Mg(2+) binding. Glutamate 188 (proton acceptor) is an active-site residue.

This sequence belongs to the PanB family. In terms of assembly, homodecamer; pentamer of dimers. Requires Mg(2+) as cofactor.

It localises to the cytoplasm. It carries out the reaction 3-methyl-2-oxobutanoate + (6R)-5,10-methylene-5,6,7,8-tetrahydrofolate + H2O = 2-dehydropantoate + (6S)-5,6,7,8-tetrahydrofolate. The protein operates within cofactor biosynthesis; (R)-pantothenate biosynthesis; (R)-pantoate from 3-methyl-2-oxobutanoate: step 1/2. Functionally, catalyzes the reversible reaction in which hydroxymethyl group from 5,10-methylenetetrahydrofolate is transferred onto alpha-ketoisovalerate to form ketopantoate. The protein is 3-methyl-2-oxobutanoate hydroxymethyltransferase of Methylorubrum extorquens (strain PA1) (Methylobacterium extorquens).